The following is a 484-amino-acid chain: Putative sodium/proton-dependent alanine carrier protein YrbD (484 aa).

Transmembrane regions (helical) follow at residues 11 to 31, 66 to 88, 92 to 114, 139 to 159, 172 to 192, 205 to 225, 238 to 258, 292 to 312, 350 to 370, 390 to 410, and 416 to 436; these read VLWSTPVIYILLGIGFAFSIM, ALSGRVGTGNIAGVATAIAFGGP, FWMWAIAFIGAASAFVESTLAQI, WFAVLFAAAALIAMAFLMPGV, FGISPFVTGCGLVLLLGFIIF, IVPFMAIGYILLSLIIIVMNV, SAFALDSAFGGLIGMAISWGV, AFSVYIDTLFVCSATAFMILF, GFGAGFVAIALFFFAFTTIMA, WAMLGLKLIILAATFYGTVKT, and ALGDAGLGIMVWLNVIAIVLL.

Belongs to the alanine or glycine:cation symporter (AGCS) (TC 2.A.25) family.

It localises to the cell membrane. This chain is Putative sodium/proton-dependent alanine carrier protein YrbD (yrbD), found in Bacillus subtilis (strain 168).